We begin with the raw amino-acid sequence, 537 residues long: Aminopeptidase Y (537 aa).

The signal sequence occupies residues 1–21; the sequence is MHFSLKQLAVAAFYATNLGSA. The propeptide occupies 22-56; the sequence is YVIPQFFQEAFQQEEPIENYLPQLNDDDSSAVAAN. N-linked (GlcNAc...) asparagine glycosylation is found at Asn85, Asn96, Asn115, Asn150, and Asn162. Zn(2+) contacts are provided by His314 and Asp326. Catalysis depends on Glu358, which acts as the Proton acceptor. Glu359 contacts Zn(2+). Residue Asn371 is glycosylated (N-linked (GlcNAc...) asparagine). Residue Asp387 coordinates Zn(2+). An N-linked (GlcNAc...) asparagine glycan is attached at Asn427. Residue His472 coordinates Zn(2+). Asn480 carries an N-linked (GlcNAc...) asparagine glycan.

This sequence belongs to the peptidase M28 family. M28A subfamily. As to quaternary structure, monomer. The cofactor is Zn(2+).

It localises to the vacuole. It carries out the reaction Preferentially, release of N-terminal lysine.. The chain is Aminopeptidase Y (APE3) from Saccharomyces cerevisiae (strain ATCC 204508 / S288c) (Baker's yeast).